Here is a 670-residue protein sequence, read N- to C-terminus: Cyclic di-GMP phosphodiesterase PdeA (670 aa).

Residues 428 to 670 (QNKIFQYILK…GFLWHKPEPI (243 aa)) form the EAL domain.

The enzyme catalyses 3',3'-c-di-GMP + H2O = 5'-phosphoguanylyl(3'-&gt;5')guanosine + H(+). In terms of biological role, phosphodiesterase (PDE) that catalyzes the hydrolysis of cyclic diguanylate (c-di-GMP) to pGpG. In Borreliella burgdorferi (strain ATCC 35210 / DSM 4680 / CIP 102532 / B31) (Borrelia burgdorferi), this protein is Cyclic di-GMP phosphodiesterase PdeA.